A 367-amino-acid polypeptide reads, in one-letter code: Heme A synthase (367 aa).

8 consecutive transmembrane segments (helical) span residues 25–45 (ALRLWLGFVLLALFCLVLVGG), 111–131 (LIARGIGVIFALPLLYFWLTG), 139–159 (WPLVGILALGALQGFIGWWMV), 174–194 (LATHLVMACLIFAGCMWIMRG), 210–230 (GLAAAIAVFALFQIYLGALVA), 272–292 (FIHRIGAYTLFALVLINMVIA), 305–325 (AVLLFALVTVQAAIGVATLLM), and 327–347 (VPLHWGLLHQAGALVVFGFAV). His274 contacts heme. A heme-binding site is contributed by His335.

The protein belongs to the COX15/CtaA family. Type 2 subfamily. Interacts with CtaB. Requires heme b as cofactor.

Its subcellular location is the cell membrane. It catalyses the reaction Fe(II)-heme o + 2 A + H2O = Fe(II)-heme a + 2 AH2. Its pathway is porphyrin-containing compound metabolism; heme A biosynthesis; heme A from heme O: step 1/1. Catalyzes the conversion of heme O to heme A by two successive hydroxylations of the methyl group at C8. The first hydroxylation forms heme I, the second hydroxylation results in an unstable dihydroxymethyl group, which spontaneously dehydrates, resulting in the formyl group of heme A. This is Heme A synthase from Rhizobium etli (strain ATCC 51251 / DSM 11541 / JCM 21823 / NBRC 15573 / CFN 42).